The chain runs to 199 residues: 3-isopropylmalate dehydratase small subunit (199 aa).

Belongs to the LeuD family. LeuD type 1 subfamily. As to quaternary structure, heterodimer of LeuC and LeuD.

The catalysed reaction is (2R,3S)-3-isopropylmalate = (2S)-2-isopropylmalate. It functions in the pathway amino-acid biosynthesis; L-leucine biosynthesis; L-leucine from 3-methyl-2-oxobutanoate: step 2/4. Its function is as follows. Catalyzes the isomerization between 2-isopropylmalate and 3-isopropylmalate, via the formation of 2-isopropylmaleate. The chain is 3-isopropylmalate dehydratase small subunit from Kocuria rhizophila (strain ATCC 9341 / DSM 348 / NBRC 103217 / DC2201).